The primary structure comprises 237 residues: DNA repair protein RecO (237 aa).

It belongs to the RecO family.

Its function is as follows. Involved in DNA repair and RecF pathway recombination. In Rickettsia peacockii (strain Rustic), this protein is DNA repair protein RecO.